Reading from the N-terminus, the 479-residue chain is FAD-dependent monooxygenase cdmI (479 aa).

Glu43, Gly57, and Arg116 together coordinate FAD. Asn156 and Asn198 each carry an N-linked (GlcNAc...) asparagine glycan. Asp315 and Ala328 together coordinate FAD. Residues 453–473 form a helical membrane-spanning segment; the sequence is PFILAVLAGLGFLLTMFKQQW.

The protein belongs to the paxM FAD-dependent monooxygenase family. Requires FAD as cofactor.

Its subcellular location is the membrane. The enzyme catalyses verruculide C + AH2 + O2 = verruculide C epoxide + A + H2O. Its pathway is secondary metabolite biosynthesis; terpenoid biosynthesis. Functionally, FAD-dependent monooxygenase; part of the gene cluster that mediates the biosynthesis of chrodrimanin B, a meroterpenoid that acts as a potent blocker of insect GABA-gated chloride channels. The first step of the pathway is the biosynthesis of 6-hydroxymellein by the polyketide synthase cdmE. The prenyltransferase cdmH acts as a 6-hydroxymellein 5-farnesyltransferase and produces the hydrophobic metabolite verruculide C. The FAD-dependent monooxygenase cdmI further converts verruculide C into verruculide B. The terpene cyclase cdmG then produced the pentacyclic molecule 3-hydroxypentacecilide A, the backbone structure of chrodrimanin B, via folding the farnesyl moiety of the substrate into the chair-boat conformation. The short-chain dehydrogenase/reductase cdmF functions as the 3-OH dehydrogenase that oxidizes the C-3 hydroxyl group of 3-hydroxypentacecilide A and produces chrodrimanin C, the dehydrogenated product of 3-hydroxypentacecilide A. The cytochrome P450 monooxygenase cdmJ then accepts both 3-hydroxypentacecilide A and chrodrimanin C and functions as a C-7-beta-hydroxylase to produce respectively chrodrimanin H and chrodrimanin F. The dioxygenase cdmA accepts chrodrimanin H to afford chrodrimanin E, which is further transformed to chrodrimanin A by the dioxygenase cdmD. CdmA can also accept chrodrimanin C as substrate to convert it into verruculide A, which is further converted into chrodrimanin T by cdmD. The last step of the biosynthesis is proposed to be performed by the acetyltransferase cdmC which acetylates chrodrimanin A to yield chrodrimanin B. The pathway may also lead to the production of additional shunt products, including chrodrimanins T and U. In Talaromyces verruculosus (Penicillium verruculosum), this protein is FAD-dependent monooxygenase cdmI.